We begin with the raw amino-acid sequence, 150 residues long: UPF0179 protein Mbur_1033 (150 aa).

The protein belongs to the UPF0179 family.

This chain is UPF0179 protein Mbur_1033, found in Methanococcoides burtonii (strain DSM 6242 / NBRC 107633 / OCM 468 / ACE-M).